Consider the following 639-residue polypeptide: Chaperone protein DnaK (639 aa).

Threonine 198 bears the Phosphothreonine; by autocatalysis mark. Over residues 603–618 the composition is skewed to low complexity; that stretch reads AKAQTQGGAQEGAAKQ. Residues 603-639 form a disordered region; it reads AKAQTQGGAQEGAAKQSNATADDVVDAEFEEVKDDKK. The segment covering 625–639 has biased composition (acidic residues); that stretch reads DVVDAEFEEVKDDKK.

Belongs to the heat shock protein 70 family.

In terms of biological role, acts as a chaperone. This Shewanella sp. (strain ANA-3) protein is Chaperone protein DnaK.